The chain runs to 489 residues: UDP-N-acetylmuramate--L-alanine ligase (489 aa).

128 to 134 (GTHGKTT) serves as a coordination point for ATP.

Belongs to the MurCDEF family.

It localises to the cytoplasm. It catalyses the reaction UDP-N-acetyl-alpha-D-muramate + L-alanine + ATP = UDP-N-acetyl-alpha-D-muramoyl-L-alanine + ADP + phosphate + H(+). Its pathway is cell wall biogenesis; peptidoglycan biosynthesis. In terms of biological role, cell wall formation. In Shewanella pealeana (strain ATCC 700345 / ANG-SQ1), this protein is UDP-N-acetylmuramate--L-alanine ligase.